A 635-amino-acid polypeptide reads, in one-letter code: 4-hydroxy-3-methylbut-2-enyl diphosphate reductase (635 aa).

Positions 1–279 (MSIILAKKSG…KEAIFKMSNK (279 aa)) are 4-hydroxy-3-methylbut-2-enyl diphosphate reductase. C12 contributes to the [4Fe-4S] cluster binding site. (2E)-4-hydroxy-3-methylbut-2-enyl diphosphate is bound by residues H42 and H77. Residues H42 and H77 each contribute to the dimethylallyl diphosphate site. The isopentenyl diphosphate site is built by H42 and H77. C99 lines the [4Fe-4S] cluster pocket. Residue H127 participates in (2E)-4-hydroxy-3-methylbut-2-enyl diphosphate binding. H127 contacts dimethylallyl diphosphate. H127 is an isopentenyl diphosphate binding site. E129 (proton donor) is an active-site residue. Position 163 (T163) interacts with (2E)-4-hydroxy-3-methylbut-2-enyl diphosphate. C191 contacts [4Fe-4S] cluster. Residues S219, S220, N221, and S263 each contribute to the (2E)-4-hydroxy-3-methylbut-2-enyl diphosphate site. Dimethylallyl diphosphate contacts are provided by S219, S220, N221, and S263. Isopentenyl diphosphate contacts are provided by S219, S220, N221, and S263. S1 motif domains follow at residues 298–373 (GQEV…LNRE), 380–455 (KEAF…ASRR), 476–544 (DTIK…LSIK), and 561–630 (GNIV…LSIK).

In the N-terminal section; belongs to the IspH family. [4Fe-4S] cluster is required as a cofactor.

It catalyses the reaction isopentenyl diphosphate + 2 oxidized [2Fe-2S]-[ferredoxin] + H2O = (2E)-4-hydroxy-3-methylbut-2-enyl diphosphate + 2 reduced [2Fe-2S]-[ferredoxin] + 2 H(+). The catalysed reaction is dimethylallyl diphosphate + 2 oxidized [2Fe-2S]-[ferredoxin] + H2O = (2E)-4-hydroxy-3-methylbut-2-enyl diphosphate + 2 reduced [2Fe-2S]-[ferredoxin] + 2 H(+). It participates in isoprenoid biosynthesis; dimethylallyl diphosphate biosynthesis; dimethylallyl diphosphate from (2E)-4-hydroxy-3-methylbutenyl diphosphate: step 1/1. Its pathway is isoprenoid biosynthesis; isopentenyl diphosphate biosynthesis via DXP pathway; isopentenyl diphosphate from 1-deoxy-D-xylulose 5-phosphate: step 6/6. Catalyzes the conversion of 1-hydroxy-2-methyl-2-(E)-butenyl 4-diphosphate (HMBPP) into a mixture of isopentenyl diphosphate (IPP) and dimethylallyl diphosphate (DMAPP). Acts in the terminal step of the DOXP/MEP pathway for isoprenoid precursor biosynthesis. This chain is 4-hydroxy-3-methylbut-2-enyl diphosphate reductase, found in Clostridium tetani (strain Massachusetts / E88).